Here is a 509-residue protein sequence, read N- to C-terminus: Heat shock 70 kDa protein 14 (509 aa).

This sequence belongs to the heat shock protein 70 family. In terms of assembly, component of ribosome-associated complex (RAC), a heterodimer composed of Hsp70/DnaK-type chaperone HSPA14 and Hsp40/DnaJ-type chaperone DNAJC2.

The protein localises to the cytoplasm. The protein resides in the cytosol. Component of the ribosome-associated complex (RAC), a complex involved in folding or maintaining nascent polypeptides in a folding-competent state. In the RAC complex, binds to the nascent polypeptide chain, while DNAJC2 stimulates its ATPase activity. This chain is Heat shock 70 kDa protein 14 (HSPA14), found in Pongo abelii (Sumatran orangutan).